The primary structure comprises 277 residues: Diaminopimelate epimerase (277 aa).

Substrate contacts are provided by Asn-13, Gln-46, and Asn-66. The active-site Proton donor is the Cys-75. Substrate-binding positions include 76 to 77 (GN), Asn-160, Asn-193, and 211 to 212 (ER). Cys-220 serves as the catalytic Proton acceptor. Substrate is bound at residue 221 to 222 (GS).

This sequence belongs to the diaminopimelate epimerase family. As to quaternary structure, homodimer.

The protein resides in the cytoplasm. It catalyses the reaction (2S,6S)-2,6-diaminopimelate = meso-2,6-diaminopimelate. It functions in the pathway amino-acid biosynthesis; L-lysine biosynthesis via DAP pathway; DL-2,6-diaminopimelate from LL-2,6-diaminopimelate: step 1/1. Its function is as follows. Catalyzes the stereoinversion of LL-2,6-diaminopimelate (L,L-DAP) to meso-diaminopimelate (meso-DAP), a precursor of L-lysine and an essential component of the bacterial peptidoglycan. This Legionella pneumophila (strain Lens) protein is Diaminopimelate epimerase.